The sequence spans 708 residues: DNA ligase (708 aa).

NAD(+)-binding positions include 35–39 (DADYD), 84–85 (SL), and Glu-118. The N6-AMP-lysine intermediate role is filled by Lys-120. Residues Arg-141, Glu-182, Lys-303, and Lys-327 each contribute to the NAD(+) site. Cys-419, Cys-422, Cys-437, and Cys-443 together coordinate Zn(2+). The 81-residue stretch at 628–708 (TRASEVSGKT…GWAKIVADAQ (81 aa)) folds into the BRCT domain.

Belongs to the NAD-dependent DNA ligase family. LigA subfamily. Mg(2+) serves as cofactor. Requires Mn(2+) as cofactor.

It catalyses the reaction NAD(+) + (deoxyribonucleotide)n-3'-hydroxyl + 5'-phospho-(deoxyribonucleotide)m = (deoxyribonucleotide)n+m + AMP + beta-nicotinamide D-nucleotide.. Its function is as follows. DNA ligase that catalyzes the formation of phosphodiester linkages between 5'-phosphoryl and 3'-hydroxyl groups in double-stranded DNA using NAD as a coenzyme and as the energy source for the reaction. It is essential for DNA replication and repair of damaged DNA. The polypeptide is DNA ligase (Rhizorhabdus wittichii (strain DSM 6014 / CCUG 31198 / JCM 15750 / NBRC 105917 / EY 4224 / RW1) (Sphingomonas wittichii)).